The sequence spans 284 residues: D-tagatose-1,6-bisphosphate aldolase subunit GatY (284 aa).

Catalysis depends on aspartate 82, which acts as the Proton donor. Zn(2+) contacts are provided by histidine 83 and histidine 180. A dihydroxyacetone phosphate-binding site is contributed by glycine 181. Histidine 208 lines the Zn(2+) pocket. Dihydroxyacetone phosphate-binding positions include 209 to 211 (GAS) and 230 to 233 (NVAT).

It belongs to the class II fructose-bisphosphate aldolase family. TagBP aldolase GatY subfamily. Forms a complex with GatZ. Zn(2+) is required as a cofactor.

The catalysed reaction is D-tagatofuranose 1,6-bisphosphate = D-glyceraldehyde 3-phosphate + dihydroxyacetone phosphate. Its pathway is carbohydrate metabolism; D-tagatose 6-phosphate degradation; D-glyceraldehyde 3-phosphate and glycerone phosphate from D-tagatose 6-phosphate: step 2/2. In terms of biological role, catalytic subunit of the tagatose-1,6-bisphosphate aldolase GatYZ, which catalyzes the reversible aldol condensation of dihydroxyacetone phosphate (DHAP or glycerone-phosphate) with glyceraldehyde 3-phosphate (G3P) to produce tagatose 1,6-bisphosphate (TBP). Requires GatZ subunit for full activity and stability. Is involved in the catabolism of galactitol and D-tagatose. This chain is D-tagatose-1,6-bisphosphate aldolase subunit GatY (gatY), found in Klebsiella oxytoca.